Consider the following 372-residue polypeptide: GDP-mannose transporter GONST3 (372 aa).

The next 10 helical transmembrane spans lie at 33 to 53 (ASVY…SIIN), 60 to 80 (FPYP…GVLL), 92 to 112 (LNLL…LSLF), 125 to 145 (TFIV…TLFL), 155 to 175 (WGSL…DYQF), 177 to 197 (IAAY…FVYI), 209 to 229 (WGLV…ELLI), 251 to 271 (VVLP…FGFS), 280 to 300 (GFTV…LMVW), and 303 to 323 (HSTF…VMYQ). Positions 331–372 (NATQEAKPQEQDEEQEKLLEMQENKESNSVDIKETLKSEEKL) are disordered. Positions 346-372 (EKLLEMQENKESNSVDIKETLKSEEKL) are enriched in basic and acidic residues.

The protein belongs to the nucleotide-sugar transporter family. GDP-Mannose:GMP antiporter (GMA) (TC 2.A.7.13) subfamily. As to expression, expressed in rosette leaves, stems, flowers and siliques.

It localises to the golgi apparatus membrane. In terms of biological role, GDP-mannose transporter that may be involved in the import of GDP-mannose from the cytoplasm into the Golgi lumen. This Arabidopsis thaliana (Mouse-ear cress) protein is GDP-mannose transporter GONST3.